The sequence spans 296 residues: Light-independent protochlorophyllide reductase iron-sulfur ATP-binding protein (296 aa).

ATP-binding positions include 39-44 (GIGKST) and K68. Mg(2+) is bound at residue S43. 2 residues coordinate [4Fe-4S] cluster: C124 and C158. An ATP-binding site is contributed by 209–210 (NR).

It belongs to the NifH/BchL/ChlL family. In terms of assembly, homodimer. Protochlorophyllide reductase is composed of three subunits; ChlL, ChlN and ChlB. The cofactor is [4Fe-4S] cluster.

The catalysed reaction is chlorophyllide a + oxidized 2[4Fe-4S]-[ferredoxin] + 2 ADP + 2 phosphate = protochlorophyllide a + reduced 2[4Fe-4S]-[ferredoxin] + 2 ATP + 2 H2O. Its pathway is porphyrin-containing compound metabolism; chlorophyll biosynthesis (light-independent). Its function is as follows. Component of the dark-operative protochlorophyllide reductase (DPOR) that uses Mg-ATP and reduced ferredoxin to reduce ring D of protochlorophyllide (Pchlide) to form chlorophyllide a (Chlide). This reaction is light-independent. The L component serves as a unique electron donor to the NB-component of the complex, and binds Mg-ATP. This Synechococcus sp. (strain WH7803) protein is Light-independent protochlorophyllide reductase iron-sulfur ATP-binding protein.